Reading from the N-terminus, the 1551-residue chain is Dual oxidase 1 (1551 aa).

An N-terminal signal peptide occupies residues 1–21 (MAVYSAVAWILLFGVLASLGA). Residues 22 to 596 (QNPVSWEVQR…YFKGSGFGFG (575 aa)) are Extracellular-facing. The tract at residues 26–593 (SWEVQRFDGW…VRDYFKGSGF (568 aa)) is peroxidase-like; mediates peroxidase activity. Asn-94, Asn-342, Asn-354, Asn-461, and Asn-534 each carry an N-linked (GlcNAc...) asparagine glycan. Residues 597 to 617 (LTIGTLCCFPLVSLLSAWIVA) traverse the membrane as a helical segment. The Cytoplasmic portion of the chain corresponds to 618–1044 (RLRMRNFKRL…KRFIENYRRH (427 aa)). EF-hand domains lie at 815–850 (PQDMFVESMFSLADKDGNGYLSFREFLDILVVFMKG), 851–886 (SPEEKSRLMFRMYDFDGNGLISKDEFIRMLRSFIEI), and 895–930 (QLAEVVESMFRESGFQDKEELTWEDFHFMLRDHDSD). 9 residues coordinate Ca(2+): Asp-828, Asp-830, Asn-832, Tyr-834, Glu-839, Asp-864, Asp-866, Asn-868, and Glu-875. The segment at 956–1248 (YISQEKICPS…GSFALIQMPR (293 aa)) is interaction with TXNDC11. A helical membrane pass occupies residues 1045–1065 (IGCVAVFYTITGALFLERAYY). Residues 1066-1080 (YAFAAHHSGITDTTR) lie on the Extracellular side of the membrane. The chain crosses the membrane as a helical span at residues 1081–1101 (VGIILSRGTAASISFMFSYIL). Positions 1087-1269 (RGTAASISFM…YVGDKLVSLS (183 aa)) constitute a Ferric oxidoreductase domain. Over 1102–1136 (LTMCRNLITFLRETFLNRYIPFDAAVDFHRFIAST) the chain is Cytoplasmic. A helical membrane pass occupies residues 1137–1157 (AIILTVLHSAGHVVNVYLFSI). Over 1158–1188 (SPLSVLSCLFPDLFHDDGSEFPQKYYWWFFQ) the chain is Extracellular. Residues 1189 to 1209 (TVPGLTGVLLLLALAIMYVFA) traverse the membrane as a helical segment. Topologically, residues 1210 to 1226 (SHHFRRRSFRGFWLTHH) are cytoplasmic. The helical transmembrane segment at 1227–1247 (LYIFLYILLIIHGSFALIQMP) threads the bilayer. Residue Arg-1248 is a topological domain, extracellular. A helical transmembrane segment spans residues 1249 to 1269 (FHIFFLVPAIIYVGDKLVSLS). The region spanning 1270-1376 (RKKVEISVVK…DGPFGEGHQE (107 aa)) is the FAD-binding FR-type domain. At 1270 to 1551 (RKKVEISVVK…THFSHHYENF (282 aa)) the chain is on the cytoplasmic side.

The protein in the N-terminal section; belongs to the peroxidase family. As to quaternary structure, interacts with TXNDC11, TPO and CYBA. N-glycosylated. As to expression, expressed in thyrocytes (at protein level).

It is found in the apical cell membrane. The enzyme catalyses NADH + O2 + H(+) = H2O2 + NAD(+). It carries out the reaction NADPH + O2 + H(+) = H2O2 + NADP(+). The protein operates within hormone biosynthesis; thyroid hormone biosynthesis. Its activity is regulated as follows. The NADPH oxidase activity is calcium-dependent. Peroxidase activity is inhibited by aminobenzohydrazide. Generates hydrogen peroxide which is required for the activity of thyroid peroxidase/TPO and lactoperoxidase/LPO. Plays a role in thyroid hormones synthesis and lactoperoxidase-mediated antimicrobial defense at the surface of mucosa. May have its own peroxidase activity through its N-terminal peroxidase-like domain. The protein is Dual oxidase 1 (Duox1) of Rattus norvegicus (Rat).